Consider the following 193-residue polypeptide: Alpha-S2-casein (193 aa).

The first 15 residues, methionine 1 to alanine 15, serve as a signal peptide directing secretion. 10 positions are modified to phosphoserine: serine 23, serine 24, serine 25, serine 28, serine 47, serine 68, serine 123, serine 125, serine 128, and serine 136.

Belongs to the alpha-casein family. In terms of tissue distribution, mammary gland specific. Secreted in milk.

The protein resides in the secreted. Important role in the capacity of milk to transport calcium phosphate. The chain is Alpha-S2-casein (CSN1S2) from Camelus dromedarius (Dromedary).